Here is a 199-residue protein sequence, read N- to C-terminus: NAD(P)H dehydrogenase (quinone) (199 aa).

Residues 4–190 (ILVLYYSMYG…TIARYQGEHV (187 aa)) form the Flavodoxin-like domain. Residues 10–15 (SMYGHI) and 79–81 (TRF) contribute to the FMN site. Tyrosine 12 contacts NAD(+). Tryptophan 99 is a binding site for substrate. FMN-binding positions include 114 to 119 (STGTGG) and histidine 134.

Belongs to the WrbA family. The cofactor is FMN.

The enzyme catalyses a quinone + NADH + H(+) = a quinol + NAD(+). It catalyses the reaction a quinone + NADPH + H(+) = a quinol + NADP(+). In Serratia proteamaculans (strain 568), this protein is NAD(P)H dehydrogenase (quinone).